We begin with the raw amino-acid sequence, 477 residues long: MEWDTVIGLEVHAQLKTKSKLFSGASTAFGATPNSQTSFIDAGLPGVLPVLNEQAIIMAIQFGLAIHGTINDLSVFERKNYFYPDLPKGYQISQYQKPIVTNGYLNIQLGNNLEKTVHIARAHLEEDAGKSLHDAHTDYTGIDLNRAGTPLLEIVTTPCLYSAEEAVNYLKTLHQLVRFLGICDGNMQEGSFRCDVNLSIKPKGSSVLGTRTELKNLNSFRFIEKAIAFEQARHQDILERGLSVIQETRLYNPDNNTTQAMRGKENENDYRYFPDPDLLPIDIDKEQIEEIKNNLPDLPEAIYKELKNTPSLNDEDINFILSSPDTYQYYKKIKSLCPAADKTIINWLKGQYAAFLNEHNLTFETPPISAKTMAAFLSKIHEKKISSSIAKNIFSMLCAGEEDIDAIIEREGYQQQNDNSALEEIVEQIIKQYPEQVIEYKAGKEKLLAFFIGQAMKQTKGKANPEQINLLLKKHLG.

This sequence belongs to the GatB/GatE family. GatB subfamily. Heterotrimer of A, B and C subunits.

The enzyme catalyses L-glutamyl-tRNA(Gln) + L-glutamine + ATP + H2O = L-glutaminyl-tRNA(Gln) + L-glutamate + ADP + phosphate + H(+). It carries out the reaction L-aspartyl-tRNA(Asn) + L-glutamine + ATP + H2O = L-asparaginyl-tRNA(Asn) + L-glutamate + ADP + phosphate + 2 H(+). Allows the formation of correctly charged Asn-tRNA(Asn) or Gln-tRNA(Gln) through the transamidation of misacylated Asp-tRNA(Asn) or Glu-tRNA(Gln) in organisms which lack either or both of asparaginyl-tRNA or glutaminyl-tRNA synthetases. The reaction takes place in the presence of glutamine and ATP through an activated phospho-Asp-tRNA(Asn) or phospho-Glu-tRNA(Gln). This chain is Aspartyl/glutamyl-tRNA(Asn/Gln) amidotransferase subunit B, found in Legionella pneumophila (strain Paris).